We begin with the raw amino-acid sequence, 291 residues long: Probable cell wall amidase LytH (291 aa).

The N-terminal stretch at 1–40 (MKKIDSWLTKHGLKNRLTLVVIVIFIIFLILLFMFVNLSD) is a signal peptide. The SH3b domain maps to 41 to 105 (EDTGQITITE…WVAGWHTNLN (65 aa)). Residues 122–286 (IVLDPGHGGS…VEQAIVDGLK (165 aa)) form the MurNAc-LAA domain. The disordered stretch occupies residues 123 to 147 (VLDPGHGGSDQGASSSTPSKSLEKN). The span at 133 to 142 (QGASSSTPSK) shows a compositional bias: polar residues.

Belongs to the N-acetylmuramoyl-L-alanine amidase 3 family.

It is found in the secreted. Its function is as follows. Probably involved in cell-wall metabolism. The chain is Probable cell wall amidase LytH (lytH) from Staphylococcus epidermidis (strain ATCC 12228 / FDA PCI 1200).